Here is a 177-residue protein sequence, read N- to C-terminus: Large ribosomal subunit protein uL6 (177 aa).

N6-acetyllysine is present on lysine 44.

This sequence belongs to the universal ribosomal protein uL6 family. In terms of assembly, part of the 50S ribosomal subunit.

This protein binds to the 23S rRNA, and is important in its secondary structure. It is located near the subunit interface in the base of the L7/L12 stalk, and near the tRNA binding site of the peptidyltransferase center. The sequence is that of Large ribosomal subunit protein uL6 from Escherichia fergusonii (strain ATCC 35469 / DSM 13698 / CCUG 18766 / IAM 14443 / JCM 21226 / LMG 7866 / NBRC 102419 / NCTC 12128 / CDC 0568-73).